The following is a 106-amino-acid chain: Trp operon repressor homolog (106 aa).

The DNA-binding element occupies 59–82 (QREIQQILNTSAATITRGSNMIKI).

The protein belongs to the TrpR family. In terms of assembly, homodimer.

The protein localises to the cytoplasm. In terms of biological role, this protein is an aporepressor. When complexed with L-tryptophan it binds the operator region of the trp operon and prevents the initiation of transcription. The chain is Trp operon repressor homolog from Histophilus somni (strain 2336) (Haemophilus somnus).